The sequence spans 594 residues: NADH-quinone oxidoreductase subunit C/D (594 aa).

The segment at 1–185 (MTTGSALYIP…DPFSLNLAKQ (185 aa)) is NADH dehydrogenase I subunit C. An NADH dehydrogenase I subunit D region spans residues 209-594 (DYMFLNLGPN…IDFVMADVDR (386 aa)).

The protein in the N-terminal section; belongs to the complex I 30 kDa subunit family. In the C-terminal section; belongs to the complex I 49 kDa subunit family. In terms of assembly, NDH-1 is composed of 13 different subunits. Subunits NuoB, CD, E, F, and G constitute the peripheral sector of the complex.

Its subcellular location is the cell inner membrane. The enzyme catalyses a quinone + NADH + 5 H(+)(in) = a quinol + NAD(+) + 4 H(+)(out). Its function is as follows. NDH-1 shuttles electrons from NADH, via FMN and iron-sulfur (Fe-S) centers, to quinones in the respiratory chain. The immediate electron acceptor for the enzyme in this species is believed to be ubiquinone. Couples the redox reaction to proton translocation (for every two electrons transferred, four hydrogen ions are translocated across the cytoplasmic membrane), and thus conserves the redox energy in a proton gradient. This Pseudomonas fluorescens (strain Pf0-1) protein is NADH-quinone oxidoreductase subunit C/D.